A 134-amino-acid chain; its full sequence is Large ribosomal subunit protein bL20 (134 aa).

This sequence belongs to the bacterial ribosomal protein bL20 family.

Functionally, binds directly to 23S ribosomal RNA and is necessary for the in vitro assembly process of the 50S ribosomal subunit. It is not involved in the protein synthesizing functions of that subunit. The chain is Large ribosomal subunit protein bL20 from Rhizobium etli (strain ATCC 51251 / DSM 11541 / JCM 21823 / NBRC 15573 / CFN 42).